A 499-amino-acid polypeptide reads, in one-letter code: UTP--glucose-1-phosphate uridylyltransferase (499 aa).

The residue at position 2 (S2) is an N-acetylserine. At S17 the chain carries Phosphoserine. T19 bears the Phosphothreonine mark. Phosphoserine occurs at positions 21 and 79. Residues 109 to 112 (LNGG), K123, Q186, and G215 contribute to the UTP site. 111 to 112 (GG) provides a ligand contact to substrate. Residue K123 coordinates Mg(2+). Substrate is bound by residues H216 and 244–246 (NGD). Residue D246 coordinates UTP. D246 serves as a coordination point for Mg(2+). R369 is subject to Omega-N-methylarginine. Residue K388 participates in UTP binding. Residue K388 is part of the active site. Positions 448–499 (HLTITGNVFLGKDVTLRGTVIIVCSDGHKIDIPNGSILENVVVTGNLQILEH) are oligomerization.

The protein belongs to the UDPGP type 1 family. In terms of assembly, homooctamer.

It carries out the reaction alpha-D-glucose 1-phosphate + UTP + H(+) = UDP-alpha-D-glucose + diphosphate. Functionally, plays a central role as a glucosyl donor in cellular metabolic pathways. The chain is UTP--glucose-1-phosphate uridylyltransferase from Saccharomyces cerevisiae (strain ATCC 204508 / S288c) (Baker's yeast).